A 396-amino-acid chain; its full sequence is Ubiquitin-like modifier-activating enzyme 5 (396 aa).

Residues glycine 76, aspartate 97, lysine 120, asparagine 143, and asparagine 177 each coordinate ATP. The Zn(2+) site is built by cysteine 219 and cysteine 222. Cysteine 243 serves as the catalytic Glycyl thioester intermediate. Zn(2+)-binding residues include cysteine 296 and cysteine 301.

It belongs to the ubiquitin-activating E1 family. UBA5 subfamily.

In terms of biological role, E1-like enzyme which activates UFM1. This Drosophila ananassae (Fruit fly) protein is Ubiquitin-like modifier-activating enzyme 5.